A 349-amino-acid chain; its full sequence is Estrogen receptor (349 aa).

The segment at residues 1-5 (YEVGM) is a DNA-binding region (nuclear receptor). Residues 1 to 38 (YEVGMMKGGIRKDRRGGRMLKHKRQREENDSRNAGALT) form a disordered region. Positions 12-24 (KDRRGGRMLKHKR) are enriched in basic residues. Positions 65 to 301 (TADQMVSALL…DLLLEMLDAH (237 aa)) constitute an NR LBD domain. Residues 306 to 327 (PAAKGSPPSEDDPLNQLAVPSP) form a disordered region.

The protein belongs to the nuclear hormone receptor family. NR3 subfamily. In terms of assembly, binds DNA as a homodimer. Can form a heterodimer with ER-beta.

Its subcellular location is the nucleus. The steroid hormones and their receptors are involved in the regulation of eukaryotic gene expression and affect cellular proliferation and differentiation in target tissues. The sequence is that of Estrogen receptor (ESR1) from Anolis carolinensis (Green anole).